A 213-amino-acid polypeptide reads, in one-letter code: Nucleoside triphosphate pyrophosphatase (213 aa).

Asp-79 functions as the Proton acceptor in the catalytic mechanism.

It belongs to the Maf family. The cofactor is a divalent metal cation.

It is found in the cytoplasm. The enzyme catalyses a ribonucleoside 5'-triphosphate + H2O = a ribonucleoside 5'-phosphate + diphosphate + H(+). It carries out the reaction a 2'-deoxyribonucleoside 5'-triphosphate + H2O = a 2'-deoxyribonucleoside 5'-phosphate + diphosphate + H(+). Functionally, nucleoside triphosphate pyrophosphatase. May have a dual role in cell division arrest and in preventing the incorporation of modified nucleotides into cellular nucleic acids. The sequence is that of Nucleoside triphosphate pyrophosphatase from Mycobacterium leprae (strain Br4923).